The chain runs to 160 residues: Large ribosomal subunit protein bL19 (160 aa).

Belongs to the bacterial ribosomal protein bL19 family.

In terms of biological role, this protein is located at the 30S-50S ribosomal subunit interface and may play a role in the structure and function of the aminoacyl-tRNA binding site. The protein is Large ribosomal subunit protein bL19 of Prochlorococcus marinus subsp. pastoris (strain CCMP1986 / NIES-2087 / MED4).